A 191-amino-acid polypeptide reads, in one-letter code: Protein YceI (191 aa).

The N-terminal stretch at methionine 1–alanine 22 is a signal peptide.

Belongs to the UPF0312 family. Type 1 subfamily.

Its subcellular location is the periplasm. The polypeptide is Protein YceI (Escherichia coli O6:H1 (strain CFT073 / ATCC 700928 / UPEC)).